A 116-amino-acid chain; its full sequence is Transmembrane protein 213 (116 aa).

Positions 1–35 (MAQSGVFLRNPGHLTSAPQAALLFSLVLTSFHLSC) are cleaved as a signal peptide. Residues 36–79 (GTETSSSNSTLSAHHPDPGTLEQCANVDFCPLASLCCRASVDEY) lie on the Extracellular side of the membrane. Residues 80 to 100 (GWIAAAVGWSFWFLTLILLCV) traverse the membrane as a helical segment. Topologically, residues 101-116 (DKLMKLTPEEPKDLAA) are cytoplasmic.

The protein localises to the membrane. This is Transmembrane protein 213 (Tmem213) from Mus musculus (Mouse).